Reading from the N-terminus, the 153-residue chain is Urease accessory protein UreE (153 aa).

Belongs to the UreE family.

The protein resides in the cytoplasm. Involved in urease metallocenter assembly. Binds nickel. Probably functions as a nickel donor during metallocenter assembly. The chain is Urease accessory protein UreE from Acetivibrio thermocellus (strain ATCC 27405 / DSM 1237 / JCM 9322 / NBRC 103400 / NCIMB 10682 / NRRL B-4536 / VPI 7372) (Clostridium thermocellum).